A 255-amino-acid chain; its full sequence is MSDTRISIRYASEDLRERAEALAAELNLPLAGESAGTPLVLILDGHGLSLALTAPDAPGPIQVDFVTGRLGYRQARISLRSEPLARAVGIKDSERPSVVDATAGLGRDGFVLASLGCEVTLLEREPVIAALLADGLERAARDADLAQTIARMHLVTGNARDWLTALDEAPRPDVIYLDPMYPHRDKSALVKKEMRVFRTLVGDDQDAPETLEAALAVAKRRVVVKRPARAEPLSGRKPSHQIPGKTTRFDVYVTG.

S-adenosyl-L-methionine contacts are provided by residues 107–108, 123–124, and Asp178; these read RD and ER. Residues 228–247 form a disordered region; sequence ARAEPLSGRKPSHQIPGKTT.

It belongs to the methyltransferase superfamily. RsmJ family.

It is found in the cytoplasm. The catalysed reaction is guanosine(1516) in 16S rRNA + S-adenosyl-L-methionine = N(2)-methylguanosine(1516) in 16S rRNA + S-adenosyl-L-homocysteine + H(+). Specifically methylates the guanosine in position 1516 of 16S rRNA. The sequence is that of Ribosomal RNA small subunit methyltransferase J from Thioalkalivibrio sulfidiphilus (strain HL-EbGR7).